We begin with the raw amino-acid sequence, 416 residues long: Orexin/Hypocretin receptor type 1 (416 aa).

Residues 1–22 form a disordered region; that stretch reads MEPSATPGAQPGVPTSSGEPFH. Over 1–46 the chain is Extracellular; it reads MEPSATPGAQPGVPTSSGEPFHLPPDYEDEFLRYLWRDYLYPKQYE. The required for response to orexin-A stretch occupies residues 26-41; the sequence is DYEDEFLRYLWRDYLY. Residues 47–67 traverse the membrane as a helical segment; it reads WVLIAAYVAVFLIALVGNTLV. At 68 to 82 the chain is on the cytoplasmic side; it reads CLAVWRNHHMRTVTN. Residues 83-105 form a helical membrane-spanning segment; that stretch reads YFIVNLSLADVLVTAICLPASLL. Topologically, residues 106–119 are extracellular; sequence VDITESWLFGQALC. Cysteines 119 and 202 form a disulfide. The chain crosses the membrane as a helical span at residues 120 to 140; sequence KVIPYLQAVSVSVAVLTLSFI. Residues 141 to 160 are Cytoplasmic-facing; that stretch reads ALDRWYAICHPLLFKSTARR. A helical membrane pass occupies residues 161 to 182; that stretch reads ARGSILGIWAVSLAVMVPQAAV. Topologically, residues 183-213 are extracellular; the sequence is MECSSVLPELANRTRLFSVCDEHWADELYPK. N-linked (GlcNAc...) asparagine glycosylation occurs at Asn194. Residues 214 to 235 traverse the membrane as a helical segment; sequence IYHSCFFIVTYLAPLGLMAMAY. Topologically, residues 236 to 298 are cytoplasmic; it reads FQIFRKLWGR…QMRARRKTAK (63 aa). A helical membrane pass occupies residues 299–321; sequence MLMVVLLVFALCYLPISVLNVLK. Residues 322–336 are Extracellular-facing; that stretch reads RVFGMFRQASDREAV. The chain crosses the membrane as a helical span at residues 337 to 360; that stretch reads YACFTFSHWLVYANSAANPIIYNF. At 361 to 416 the chain is on the cytoplasmic side; the sequence is LSGKFREQFKAAFSCCLPGLGPGSSARHKSLSLQSRCSVSKVSEHVVLTTVTTVLS.

This sequence belongs to the G-protein coupled receptor 1 family. In terms of tissue distribution, widely expressed.

The protein resides in the cell membrane. Functionally, moderately selective excitatory receptor for orexin-A and, with a lower affinity, for orexin-B neuropeptide. Triggers an increase in cytoplasmic Ca(2+) levels in response to orexin-A binding. This chain is Orexin/Hypocretin receptor type 1, found in Mus musculus (Mouse).